Here is a 167-residue protein sequence, read N- to C-terminus: N5-carboxyaminoimidazole ribonucleotide mutase (167 aa).

3 residues coordinate substrate: S11, D14, and R41.

This sequence belongs to the AIR carboxylase family. Class I subfamily.

The enzyme catalyses 5-carboxyamino-1-(5-phospho-D-ribosyl)imidazole + H(+) = 5-amino-1-(5-phospho-D-ribosyl)imidazole-4-carboxylate. Its pathway is purine metabolism; IMP biosynthesis via de novo pathway; 5-amino-1-(5-phospho-D-ribosyl)imidazole-4-carboxylate from 5-amino-1-(5-phospho-D-ribosyl)imidazole (N5-CAIR route): step 2/2. In terms of biological role, catalyzes the conversion of N5-carboxyaminoimidazole ribonucleotide (N5-CAIR) to 4-carboxy-5-aminoimidazole ribonucleotide (CAIR). The polypeptide is N5-carboxyaminoimidazole ribonucleotide mutase (Aquifex aeolicus (strain VF5)).